Reading from the N-terminus, the 221-residue chain is MQHKYDIATAMRLYFIAGSQDVTHFASDPADNLLSVLEQALQAGITCYQFREKGKRALQNPIAYKALAIACRNLCRKYKVPFVVNDDVALAVEIGADGIHVGQTDMPPHQVKRLCTGKCFVGTSVNTIEQGLIAQNDPNVDYFGVGPIFPTQSKEDAEPVLSPAFITQIRANHIDKPMVAIGGIKVKDVAMLMAKGANGVAVISAITQSNHIEKTVKELLR.

Residues 49–53 (QFREK) and N85 contribute to the 4-amino-2-methyl-5-(diphosphooxymethyl)pyrimidine site. Mg(2+)-binding residues include D86 and D105. S124 serves as a coordination point for 4-amino-2-methyl-5-(diphosphooxymethyl)pyrimidine. 151 to 153 (TQS) contributes to the 2-[(2R,5Z)-2-carboxy-4-methylthiazol-5(2H)-ylidene]ethyl phosphate binding site. K154 contributes to the 4-amino-2-methyl-5-(diphosphooxymethyl)pyrimidine binding site. Residues G183 and 203 to 204 (IS) each bind 2-[(2R,5Z)-2-carboxy-4-methylthiazol-5(2H)-ylidene]ethyl phosphate.

This sequence belongs to the thiamine-phosphate synthase family. The cofactor is Mg(2+).

It catalyses the reaction 2-[(2R,5Z)-2-carboxy-4-methylthiazol-5(2H)-ylidene]ethyl phosphate + 4-amino-2-methyl-5-(diphosphooxymethyl)pyrimidine + 2 H(+) = thiamine phosphate + CO2 + diphosphate. The catalysed reaction is 2-(2-carboxy-4-methylthiazol-5-yl)ethyl phosphate + 4-amino-2-methyl-5-(diphosphooxymethyl)pyrimidine + 2 H(+) = thiamine phosphate + CO2 + diphosphate. It carries out the reaction 4-methyl-5-(2-phosphooxyethyl)-thiazole + 4-amino-2-methyl-5-(diphosphooxymethyl)pyrimidine + H(+) = thiamine phosphate + diphosphate. It functions in the pathway cofactor biosynthesis; thiamine diphosphate biosynthesis; thiamine phosphate from 4-amino-2-methyl-5-diphosphomethylpyrimidine and 4-methyl-5-(2-phosphoethyl)-thiazole: step 1/1. In terms of biological role, condenses 4-methyl-5-(beta-hydroxyethyl)thiazole monophosphate (THZ-P) and 2-methyl-4-amino-5-hydroxymethyl pyrimidine pyrophosphate (HMP-PP) to form thiamine monophosphate (TMP). The chain is Thiamine-phosphate synthase from Histophilus somni (strain 129Pt) (Haemophilus somnus).